The sequence spans 229 residues: GTP cyclohydrolase 1 (229 aa).

Residues 1-31 (MFRESDNTIAPSNQDLNKPVVDKEQPAERTP) are disordered. The span at 7 to 16 (NTIAPSNQDL) shows a compositional bias: polar residues. Zn(2+) contacts are provided by Cys-117, His-120, and Cys-188.

The protein belongs to the GTP cyclohydrolase I family. As to quaternary structure, toroid-shaped homodecamer, composed of two pentamers of five dimers.

The catalysed reaction is GTP + H2O = 7,8-dihydroneopterin 3'-triphosphate + formate + H(+). It functions in the pathway cofactor biosynthesis; 7,8-dihydroneopterin triphosphate biosynthesis; 7,8-dihydroneopterin triphosphate from GTP: step 1/1. The chain is GTP cyclohydrolase 1 from Rhodopirellula baltica (strain DSM 10527 / NCIMB 13988 / SH1).